The following is a 274-amino-acid chain: Dehydration-responsive element-binding protein 2A (274 aa).

2 stretches are compositionally biased toward basic and acidic residues: residues 1–10 (MERGEGRRGD) and 35–50 (KWWKEQNQKLQEENSS). Residues 1 to 75 (MERGEGRRGD…KGGPENSNCA (75 aa)) are disordered. Positions 75–132 (AYRGVRQRTWGKWVAEIREPNRGRRLWLGSFPTALEAAHAYDEAARAMYGPTARVNFA) form a DNA-binding region, AP2/ERF.

This sequence belongs to the AP2/ERF transcription factor family. ERF subfamily.

It is found in the nucleus. Transcriptional activator that binds specifically to the DNA sequence 5'-[AG]CCGAC-3' of the cis-acting dehydration-responsive element (DRE). Binding to the C-repeat/DRE element mediates high salinity- and dehydration-inducible transcription. This chain is Dehydration-responsive element-binding protein 2A (DREB2A), found in Oryza sativa subsp. japonica (Rice).